The sequence spans 550 residues: Protein UshA (550 aa).

The signal sequence occupies residues 1-25 (MKFLKRGVALALLAAFALTTQPAQA). Positions 41, 43, 84, 116, 217, 252, and 254 each coordinate Zn(2+). A disulfide bridge links cysteine 258 with cysteine 275. Residues phenylalanine 429 and 498–504 (FNATGGD) each bind substrate.

This sequence belongs to the 5'-nucleotidase family. Monomer. Zn(2+) serves as cofactor.

The protein localises to the periplasm. The enzyme catalyses UDP-sugar + H2O = UMP + alpha-D-aldose 1-phosphate.. It catalyses the reaction a ribonucleoside 5'-phosphate + H2O = a ribonucleoside + phosphate. In terms of biological role, degradation of external UDP-glucose to uridine monophosphate and glucose-1-phosphate, which can then be used by the cell. In Salmonella pullorum, this protein is Protein UshA (ushA).